Here is a 153-residue protein sequence, read N- to C-terminus: E3 ubiquitin-protein ligase AIRP1 (153 aa).

An RING-type; atypical zinc finger spans residues 104-145; it reads CPICLEEYEIDNPKLLTKCGHDFHLACILAWMERSEACPVCD.

The protein localises to the cytoplasm. Its subcellular location is the cytosol. The enzyme catalyses S-ubiquitinyl-[E2 ubiquitin-conjugating enzyme]-L-cysteine + [acceptor protein]-L-lysine = [E2 ubiquitin-conjugating enzyme]-L-cysteine + N(6)-ubiquitinyl-[acceptor protein]-L-lysine.. In terms of biological role, possesses E3 ubiquitin-protein ligase activity in vitro when associated with the E2 enzyme UBC8 in vitro. Plays combinatory roles with AIRP2 in the positive regulation of the abscisic acid-mediated drought stress response. The polypeptide is E3 ubiquitin-protein ligase AIRP1 (Arabidopsis thaliana (Mouse-ear cress)).